Consider the following 125-residue polypeptide: Small ribosomal subunit protein eS6 (125 aa).

Belongs to the eukaryotic ribosomal protein eS6 family.

The chain is Small ribosomal subunit protein eS6 from Pyrococcus abyssi (strain GE5 / Orsay).